Here is a 438-residue protein sequence, read N- to C-terminus: Keratin, type I cytoskeletal 18 (438 aa).

Residues 4-83 (AVSSRSTVVS…TLSGNAVISN (80 aa)) are head. The tract at residues 84–119 (EKETMQDLNDRLSNYLETVRRLENANQQLEIQIREA) is coil 1A. The IF rod domain occupies 84–395 (EKETMQDLND…HLLGGEDSDT (312 aa)). Residues 120 to 136 (MEKRGPSVRDYSNYEKI) are linker 1. Positions 137–228 (IKELRDQIYD…KNHEDEVIAL (92 aa)) are coil 1B. The tract at residues 229–252 (RNQVNSCGVQVDLDAPKGTDLAEI) is linker 12. The segment at 253-393 (MATLRAEYEA…YRHLLGGEDS (141 aa)) is coil 2. A tail region spans residues 394–438 (DTLSLQDALSAMKVSNVQTVQKIVVTTQKLVDGKVVEDSTVTETK).

The protein belongs to the intermediate filament family. Heterotetramer of two type I and two type II keratins. Keratin-18 associates with keratin-8. In terms of processing, phosphorylated. Post-translationally, proteolytically cleaved by caspases during epithelial cell apoptosis. In terms of tissue distribution, expressed at low levels in skin.

Functionally, when phosphorylated, plays a role in filament reorganization. In Protopterus aethiopicus (Marbled lungfish), this protein is Keratin, type I cytoskeletal 18.